Consider the following 426-residue polypeptide: Zinc finger CCCH domain-containing protein 15 (426 aa).

The span at 1–12 shows a compositional bias: low complexity; the sequence is MPPKKQAQAGGS. Disordered stretches follow at residues 1 to 30 and 53 to 74; these read MPPK…KTFG and GQQN…KDDK. Residues 13–29 are compositionally biased toward basic and acidic residues; that stretch reads KKAEQKKKEKIIEDKTF. Residues 53-62 show a composition bias toward polar residues; that stretch reads GQQNPRQVAQ. A coiled-coil region spans residues 61–86; it reads AQSEAEKKLKKDDKKKELQELNELFK. The span at 64–74 shows a compositional bias: basic and acidic residues; that stretch reads EAEKKLKKDDK. C3H1-type zinc fingers lie at residues 99-126 and 174-212; these read DPKS…HDLT and PKTQ…HALP. Residues 218-285 adopt a coiled-coil conformation; the sequence is KKDKKKEEKE…RRKADFKAGK (68 aa). Ser-231 is modified (phosphoserine). A required for interaction with DRG1 region spans residues 236 to 260; it reads IERERSALGPNVTKITLESFLAWKK. The segment at 299–326 is disordered; it reads PELVNDDDEEADDTRYTQGTGGDEVDDS. Phosphoserine is present on residues Ser-351, Ser-360, and Ser-381. Residues 358–411 are disordered; that stretch reads YTSDKDENKLSEASGGRAENGERSDLEEDNEREGTENGAIDAVPVDENLFTGED.

It belongs to the ZC3H15/TMA46 family. Interacts with DRG1; this interaction prevents DRG1 poly-ubiquitination and degradation by proteasome. DRG1-ZC3H15/DFRP1 complex co-sediments with polysomes. Associates with microtubules.

It is found in the cytoplasm. Its subcellular location is the nucleus. Functionally, protects DRG1 from proteolytic degradation. Stimulates DRG1 GTPase activity likely by increasing the affinity for the potassium ions. The polypeptide is Zinc finger CCCH domain-containing protein 15 (ZC3H15) (Homo sapiens (Human)).